The chain runs to 262 residues: Acyl-[acyl-carrier-protein]--UDP-N-acetylglucosamine O-acyltransferase (262 aa).

This sequence belongs to the transferase hexapeptide repeat family. LpxA subfamily. In terms of assembly, homotrimer.

It is found in the cytoplasm. It carries out the reaction a (3R)-hydroxyacyl-[ACP] + UDP-N-acetyl-alpha-D-glucosamine = a UDP-3-O-[(3R)-3-hydroxyacyl]-N-acetyl-alpha-D-glucosamine + holo-[ACP]. Its pathway is glycolipid biosynthesis; lipid IV(A) biosynthesis; lipid IV(A) from (3R)-3-hydroxytetradecanoyl-[acyl-carrier-protein] and UDP-N-acetyl-alpha-D-glucosamine: step 1/6. Its function is as follows. Involved in the biosynthesis of lipid A, a phosphorylated glycolipid that anchors the lipopolysaccharide to the outer membrane of the cell. This is Acyl-[acyl-carrier-protein]--UDP-N-acetylglucosamine O-acyltransferase from Salmonella typhi.